We begin with the raw amino-acid sequence, 564 residues long: Arginine--tRNA ligase (564 aa).

The 'HIGH' region motif lies at 124 to 134; the sequence is PNIAKDMHVGH.

This sequence belongs to the class-I aminoacyl-tRNA synthetase family. In terms of assembly, monomer.

It localises to the cytoplasm. It catalyses the reaction tRNA(Arg) + L-arginine + ATP = L-arginyl-tRNA(Arg) + AMP + diphosphate. This is Arginine--tRNA ligase from Chlamydia caviae (strain ATCC VR-813 / DSM 19441 / 03DC25 / GPIC) (Chlamydophila caviae).